The primary structure comprises 226 residues: Ribonuclease 3 (226 aa).

The RNase III domain occupies 7-129 (LPRLCRTLGY…IIGAVYLDSD (123 aa)). Position 42 (E42) interacts with Mg(2+). The active site involves D46. D115 and E118 together coordinate Mg(2+). E118 is an active-site residue. Residues 156–226 (DAKTLLQEHL…AAQVLELLKK (71 aa)) form the DRBM domain.

Belongs to the ribonuclease III family. As to quaternary structure, homodimer. The cofactor is Mg(2+).

The protein localises to the cytoplasm. The enzyme catalyses Endonucleolytic cleavage to 5'-phosphomonoester.. Digests double-stranded RNA. Involved in the processing of primary rRNA transcript to yield the immediate precursors to the large and small rRNAs (23S and 16S). Processes some mRNAs, and tRNAs when they are encoded in the rRNA operon. Processes pre-crRNA and tracrRNA of type II CRISPR loci if present in the organism. The chain is Ribonuclease 3 from Shewanella baltica (strain OS185).